A 172-amino-acid chain; its full sequence is ATP synthase subunit b (172 aa).

The helical transmembrane segment at Leu-27–Glu-47 threads the bilayer.

The protein belongs to the ATPase B chain family. In terms of assembly, F-type ATPases have 2 components, F(1) - the catalytic core - and F(0) - the membrane proton channel. F(1) has five subunits: alpha(3), beta(3), gamma(1), delta(1), epsilon(1). F(0) has four main subunits: a(1), b(1), b'(1) and c(10-14). The alpha and beta chains form an alternating ring which encloses part of the gamma chain. F(1) is attached to F(0) by a central stalk formed by the gamma and epsilon chains, while a peripheral stalk is formed by the delta, b and b' chains.

The protein localises to the cellular thylakoid membrane. In terms of biological role, f(1)F(0) ATP synthase produces ATP from ADP in the presence of a proton or sodium gradient. F-type ATPases consist of two structural domains, F(1) containing the extramembraneous catalytic core and F(0) containing the membrane proton channel, linked together by a central stalk and a peripheral stalk. During catalysis, ATP synthesis in the catalytic domain of F(1) is coupled via a rotary mechanism of the central stalk subunits to proton translocation. Functionally, component of the F(0) channel, it forms part of the peripheral stalk, linking F(1) to F(0). The sequence is that of ATP synthase subunit b from Prochlorococcus marinus (strain MIT 9313).